The following is a 392-amino-acid chain: Multidrug resistance protein MdtL (392 aa).

12 consecutive transmembrane segments (helical) span residues 4–24, 38–58, 69–89, 95–115, 131–151, 158–178, 209–229, 246–266, 270–290, 294–314, 331–351, and 357–377; these read FLLC…MYLV, AQLH…MLFA, PVAI…AQVH, LIGR…AFAI, LLNG…HLIM, SLFY…VFIL, LLIT…SPVL, ALMA…LSLF, TLML…SLAT, VTLI…GVAM, VLGI…AIIG, and MLIG…LVVT.

Belongs to the major facilitator superfamily. DHA1 family. MdtL (TC 2.A.1.2.22) subfamily.

It localises to the cell inner membrane. In Klebsiella pneumoniae subsp. pneumoniae (strain ATCC 700721 / MGH 78578), this protein is Multidrug resistance protein MdtL.